The chain runs to 457 residues: Argininosuccinate lyase (457 aa).

This sequence belongs to the lyase 1 family. Argininosuccinate lyase subfamily.

It is found in the cytoplasm. The catalysed reaction is 2-(N(omega)-L-arginino)succinate = fumarate + L-arginine. It functions in the pathway amino-acid biosynthesis; L-arginine biosynthesis; L-arginine from L-ornithine and carbamoyl phosphate: step 3/3. The polypeptide is Argininosuccinate lyase (Escherichia coli O9:H4 (strain HS)).